The primary structure comprises 388 residues: Succinate--CoA ligase [ADP-forming] subunit beta (388 aa).

The ATP-grasp domain occupies 9 to 244 (KQLFSRYGLP…PSQEDPREAQ (236 aa)). ATP contacts are provided by residues lysine 46, 53-55 (GRG), glutamate 99, threonine 102, and glutamate 107. Asparagine 199 and aspartate 213 together coordinate Mg(2+). Residues asparagine 264 and 321–323 (GIV) contribute to the substrate site.

It belongs to the succinate/malate CoA ligase beta subunit family. Heterotetramer of two alpha and two beta subunits. It depends on Mg(2+) as a cofactor.

The catalysed reaction is succinate + ATP + CoA = succinyl-CoA + ADP + phosphate. It carries out the reaction GTP + succinate + CoA = succinyl-CoA + GDP + phosphate. The protein operates within carbohydrate metabolism; tricarboxylic acid cycle; succinate from succinyl-CoA (ligase route): step 1/1. Succinyl-CoA synthetase functions in the citric acid cycle (TCA), coupling the hydrolysis of succinyl-CoA to the synthesis of either ATP or GTP and thus represents the only step of substrate-level phosphorylation in the TCA. The beta subunit provides nucleotide specificity of the enzyme and binds the substrate succinate, while the binding sites for coenzyme A and phosphate are found in the alpha subunit. This chain is Succinate--CoA ligase [ADP-forming] subunit beta, found in Proteus mirabilis (strain HI4320).